Here is a 253-residue protein sequence, read N- to C-terminus: MMLSATQPLSEKLPAHGCRHVAIIMDGNGRWAKKQGKIRAFGHKAGAKSVRRAVSFAANNGIEALTLYAFSSENWNRPAQEVSALMELFVWALDSEVKSLHRHNVRLRIIGDTSRFNSRLQERIRKSEALTAGNTGLTLNIAANYGGRWDIVQGVRQLAEKVQQGNLQPDQIDEEMLNQHVCMHELAPVDLVIRTGGEHRISNFLLWQIAYAELYFTDVLWPDFDEQDFEGALNAFANRERRFGGTEPGDETA.

Aspartate 26 is an active-site residue. Aspartate 26 is a binding site for Mg(2+). Substrate contacts are provided by residues 27–30 (GNGR), tryptophan 31, arginine 39, histidine 43, and 71–73 (SSE). The active-site Proton acceptor is asparagine 74. Substrate-binding residues include tryptophan 75, arginine 77, and arginine 194. Position 199 (histidine 199) interacts with Mg(2+). 200-202 (RIS) serves as a coordination point for substrate. Position 213 (glutamate 213) interacts with Mg(2+).

Belongs to the UPP synthase family. As to quaternary structure, homodimer. It depends on Mg(2+) as a cofactor.

It catalyses the reaction 8 isopentenyl diphosphate + (2E,6E)-farnesyl diphosphate = di-trans,octa-cis-undecaprenyl diphosphate + 8 diphosphate. In terms of biological role, catalyzes the sequential condensation of isopentenyl diphosphate (IPP) with (2E,6E)-farnesyl diphosphate (E,E-FPP) to yield (2Z,6Z,10Z,14Z,18Z,22Z,26Z,30Z,34E,38E)-undecaprenyl diphosphate (di-trans,octa-cis-UPP). UPP is the precursor of glycosyl carrier lipid in the biosynthesis of bacterial cell wall polysaccharide components such as peptidoglycan and lipopolysaccharide. This chain is Ditrans,polycis-undecaprenyl-diphosphate synthase ((2E,6E)-farnesyl-diphosphate specific), found in Shigella flexneri.